A 123-amino-acid polypeptide reads, in one-letter code: Holo-[acyl-carrier-protein] synthase (123 aa).

Mg(2+)-binding residues include Asp8 and Glu56.

The protein belongs to the P-Pant transferase superfamily. AcpS family. Mg(2+) is required as a cofactor.

It is found in the cytoplasm. It carries out the reaction apo-[ACP] + CoA = holo-[ACP] + adenosine 3',5'-bisphosphate + H(+). Its function is as follows. Transfers the 4'-phosphopantetheine moiety from coenzyme A to a Ser of acyl-carrier-protein. The sequence is that of Holo-[acyl-carrier-protein] synthase from Treponema denticola (strain ATCC 35405 / DSM 14222 / CIP 103919 / JCM 8153 / KCTC 15104).